Here is a 339-residue protein sequence, read N- to C-terminus: Anthranilate phosphoribosyltransferase (339 aa).

Residues Gly-81, 84 to 85, Ser-89, 91 to 94, 109 to 117, and Ala-121 each bind 5-phospho-alpha-D-ribose 1-diphosphate; these read GD, NVST, and KHGNRALSS. Gly-81 serves as a coordination point for anthranilate. Residue Ser-93 coordinates Mg(2+). An anthranilate-binding site is contributed by Asn-112. Arg-167 provides a ligand contact to anthranilate. Positions 226 and 227 each coordinate Mg(2+).

It belongs to the anthranilate phosphoribosyltransferase family. Homodimer. It depends on Mg(2+) as a cofactor.

It catalyses the reaction N-(5-phospho-beta-D-ribosyl)anthranilate + diphosphate = 5-phospho-alpha-D-ribose 1-diphosphate + anthranilate. Its pathway is amino-acid biosynthesis; L-tryptophan biosynthesis; L-tryptophan from chorismate: step 2/5. Its function is as follows. Catalyzes the transfer of the phosphoribosyl group of 5-phosphorylribose-1-pyrophosphate (PRPP) to anthranilate to yield N-(5'-phosphoribosyl)-anthranilate (PRA). The sequence is that of Anthranilate phosphoribosyltransferase from Rhodopseudomonas palustris (strain BisB18).